A 151-amino-acid chain; its full sequence is Ribosome maturation factor RimP (151 aa).

Belongs to the RimP family.

The protein resides in the cytoplasm. Required for maturation of 30S ribosomal subunits. The chain is Ribosome maturation factor RimP from Synechocystis sp. (strain ATCC 27184 / PCC 6803 / Kazusa).